A 420-amino-acid chain; its full sequence is Calreticulin (420 aa).

The N-terminal stretch at 1–18 (MKWGVVAVLATLVVAASA) is a signal peptide. Cys-106 and Cys-140 are disulfide-bonded. An alpha-D-glucoside contacts are provided by Tyr-110, Lys-112, Tyr-131, and Asp-138. A run of 7 repeats spans residues 194 to 205 (VASGSLYEDWDM), 213 to 224 (DPKASKPEDWDE), 230 to 241 (DPEDKKPEGWDD), 248 to 259 (DKDAKKPEDWDD), 263 to 273 (GTWEPPMIPNP), 277 to 287 (GEWKAKMIKNP), and 291 to 301 (GIWVAPDIDNP). A 4 X approximate repeats region spans residues 194-259 (VASGSLYEDW…DAKKPEDWDD (66 aa)). The segment covering 210–220 (TIKDPKASKPE) has biased composition (basic and acidic residues). Residues 210–272 (TIKDPKASKP…GTWEPPMIPN (63 aa)) form a disordered region. Residues 221 to 230 (DWDEREEIAD) show a composition bias toward acidic residues. The interval 263 to 301 (GTWEPPMIPNPEYKGEWKAKMIKNPAYKGIWVAPDIDNP) is 3 X approximate repeats. Glu-321 provides a ligand contact to an alpha-D-glucoside. Basic and acidic residues predominate over residues 357–376 (EEKAMFDKVKKEEDEKKAKD). Residues 357–420 (EEKAMFDKVK…EEEESGHDEL (64 aa)) form a disordered region. 2 stretches are compositionally biased toward acidic residues: residues 385 to 398 (EAAE…EDKE) and 411 to 420 (EEEESGHDEL). Residues 417-420 (HDEL) carry the Prevents secretion from ER motif.

Belongs to the calreticulin family.

It is found in the endoplasmic reticulum lumen. Molecular calcium-binding chaperone promoting folding, oligomeric assembly and quality control in the ER via the calreticulin/calnexin cycle. This lectin may interact transiently with almost all of the monoglucosylated glycoproteins that are synthesized in the ER. The protein is Calreticulin of Chlamydomonas reinhardtii (Chlamydomonas smithii).